The primary structure comprises 494 residues: Tripartite motif-containing protein 5 (494 aa).

Ala2 bears the N-acetylalanine mark. The segment at 15-59 adopts an RING-type zinc-finger fold; it reads CPICLELLTEPLSLDCGHSFCQACITANHKKSMLHQGERSCPLCR. Ser86 is subject to Phosphoserine. Residues 91-132 form a B box-type zinc finger; the sequence is QKVDHCARHGEKLLLFCQQDGNVICWLCERSQEHRGHHTLLV. Zn(2+) contacts are provided by Cys96, His99, Cys118, and His124. A coiled-coil region spans residues 132–222; that stretch reads VEEVAQTYRE…KRLTQSENDM (91 aa). Residues 186-199 are required for interaction with GABARAP and for autophagy; that stretch reads FKQLRDILDCEESN. Positions 280–494 constitute a B30.2/SPRY domain; that stretch reads PDLKGMLQVF…LPMTLCSPRS (215 aa).

The protein belongs to the TRIM/RBCC family. In terms of assembly, can form homodimers and homotrimers. In addition to lower-order dimerization, also exhibits a higher-order multimerization and both low- and high-order multimerizations are essential for its restriction activity. Interacts with BTBD1 and BTBD2. Interacts with PSMC4, PSMC5, PSMD7 and HSPA8/HSC70. Interacts (via B30.2/SPRY domain) with HSPA1A/B. Interacts with PSMC2, MAP3K7/TAK1, TAB2 and TAB3. Interacts with SQSTM1. Interacts with TRIM6 and TRIM34. Interacts with ULK1 (phosphorylated form), GABARAP, GABARAPL1, GABARAPL2, MAP1LC3A, MAP1LC3C and BECN1. Degraded in a proteasome-independent fashion in the absence of viral infection but in a proteasome-dependent fashion following exposure to restriction sensitive virus. Post-translationally, autoubiquitinated in a RING finger- and UBE2D2-dependent manner. Monoubiquitinated by TRIM21. Deubiquitinated by Yersinia YopJ. Ubiquitination may not lead to proteasomal degradation.

It is found in the cytoplasm. The protein localises to the nucleus. It catalyses the reaction S-ubiquitinyl-[E2 ubiquitin-conjugating enzyme]-L-cysteine + [acceptor protein]-L-lysine = [E2 ubiquitin-conjugating enzyme]-L-cysteine + N(6)-ubiquitinyl-[acceptor protein]-L-lysine.. Its pathway is protein modification; protein ubiquitination. Its function is as follows. Capsid-specific restriction factor that prevents infection from non-host-adapted retroviruses. Blocks viral replication early in the life cycle, after viral entry but before reverse transcription. In addition to acting as a capsid-specific restriction factor, also acts as a pattern recognition receptor that activates innate immune signaling in response to the retroviral capsid lattice. Binding to the viral capsid triggers its E3 ubiquitin ligase activity, and in concert with the heterodimeric ubiquitin conjugating enzyme complex UBE2V1-UBE2N (also known as UBC13-UEV1A complex) generates 'Lys-63'-linked polyubiquitin chains, which in turn are catalysts in the autophosphorylation of the MAP3K7/TAK1 complex (includes TAK1, TAB2, and TAB3). Activation of the MAP3K7/TAK1 complex by autophosphorylation results in the induction and expression of NF-kappa-B and MAPK-responsive inflammatory genes, thereby leading to an innate immune response in the infected cell. Plays a role in regulating autophagy through activation of autophagy regulator BECN1 by causing its dissociation from its inhibitors BCL2 and TAB2. The sequence is that of Tripartite motif-containing protein 5 (TRIM5) from Pithecia pithecia (White-faced saki).